A 441-amino-acid polypeptide reads, in one-letter code: Transcription factor TOXE (441 aa).

The interval 14-40 is basic DNA-binding region; that stretch reads TDINERRKLQNRVAQRKYRTRQKTRMK. A disordered region spans residues 209 to 243; sequence FEPNDQRKTENLPREPCGSCPSSSHGYSPTSGNPS. Over residues 212–221 the composition is skewed to basic and acidic residues; the sequence is NDQRKTENLP. Positions 228–241 are enriched in polar residues; the sequence is CPSSSHGYSPTSGN. ANK repeat units follow at residues 289–318, 322–351, 355–384, and 413–440; these read DQFSPLMTAISLGRLDIARILLQSGAPLDI, SGKTALHRAVGRRELHMVEALLNLGAEMLA, EGNSLLHIAVKTNSLSITRLLLERYKSCRE, and EGMTAVHLSVIFNRPEILQLLVKYSANV.

This sequence belongs to the bZIP family. In terms of assembly, monomer.

The protein localises to the nucleus. Its function is as follows. Transcription factor, part of the diffuse TOX2 gene cluster that mediates the biosynthesis of the HC-toxin, cyclic tetrapeptide of structure cyclo(D-Pro-L-Ala-D-Ala-L-Aeo), where Aeo stands for 2-amino-9,10-epoxi-8-oxodecanoic acid. HC-toxin is a determinant of specificity and virulence in the interaction between the producing fungus and its host, maize. TOXE is a pathway-specific transcription factor which coordinates the expression of genes involved in HC-toxin biosynthesis. Binds to the tox-box, a 10-bp motif with the consensus 5'-ATCTCNCGNA-3', which is found in the promoter of all genes involved in HC-toxin biosynthesis. Required for pathogenicity of the fungus on maize. This Cochliobolus carbonum (Maize leaf spot fungus) protein is Transcription factor TOXE.